A 167-amino-acid polypeptide reads, in one-letter code: NAD(P)H-quinone oxidoreductase subunit J (167 aa).

It belongs to the complex I 30 kDa subunit family. In terms of assembly, NDH-1 can be composed of about 15 different subunits; different subcomplexes with different compositions have been identified which probably have different functions.

It is found in the cellular thylakoid membrane. The enzyme catalyses a plastoquinone + NADH + (n+1) H(+)(in) = a plastoquinol + NAD(+) + n H(+)(out). The catalysed reaction is a plastoquinone + NADPH + (n+1) H(+)(in) = a plastoquinol + NADP(+) + n H(+)(out). In terms of biological role, NDH-1 shuttles electrons from an unknown electron donor, via FMN and iron-sulfur (Fe-S) centers, to quinones in the respiratory and/or the photosynthetic chain. The immediate electron acceptor for the enzyme in this species is believed to be plastoquinone. Couples the redox reaction to proton translocation, and thus conserves the redox energy in a proton gradient. Cyanobacterial NDH-1 also plays a role in inorganic carbon-concentration. In Trichodesmium erythraeum (strain IMS101), this protein is NAD(P)H-quinone oxidoreductase subunit J.